A 264-amino-acid chain; its full sequence is Propanediol uptake facilitator PduF (264 aa).

2 helical membrane-spanning segments follow: residues 10-30 and 42-62; these read GAEF…LSAL and ICII…GISG. Residues 66-68 carry the NPA 1 motif; the sequence is NPA. Helical transmembrane passes span 84–104, 143–163, and 179–199; these read VLPY…LAYV, VWQA…MIMA, and LLIG…TGFA. The NPA 2 signature appears at 201-203; the sequence is NPA. Residues 228–248 traverse the membrane as a helical segment; that stretch reads IPYFIVPIVAPVIGACAGAAI.

It belongs to the MIP/aquaporin (TC 1.A.8) family.

It localises to the cell inner membrane. Its function is as follows. Probably facilitates diffusion of 1,2-propanediol (1,2-PD) into the cell. Modeling suggests active transport of 1,2-PD is required at low extracellular concentrations to allow maximal growth and saturation of PduP/PduQ within the bacterial microcompartment (BMC); this protein may be the cellular transporter. The 1,2-PD-specific bacterial microcompartment (BMC) concentrates low levels of 1,2-PD catabolic enzymes, concentrates volatile reaction intermediates thus enhancing pathway flux and keeps the level of toxic, mutagenic propionaldehyde low. The sequence is that of Propanediol uptake facilitator PduF from Salmonella typhimurium (strain LT2 / SGSC1412 / ATCC 700720).